The primary structure comprises 183 residues: Abscisic acid receptor PYL10 (183 aa).

Positions 20–172 are START-like; that stretch reads HELVESQCSS…NLNSLADVTE (153 aa). Cys-27 and Cys-153 are oxidised to a cystine. Abscisate is bound by residues Lys-56, 85-90, 112-118, and Glu-137; these read ATKSTE and RLKNYSS. The Gate loop motif lies at 81-85; it reads SGLPA. The Latch loop motif lies at 111 to 113; the sequence is HRL.

It belongs to the PYR/PYL/RCAR abscisic acid intracellular receptor family. Monomer. Forms heterodimer with PYL13, thus antagonizing PP2Cs-binding and ABA-independent inhibition of PP2Cs. Homodimer. Binds ABA on one subunit only. Binds to CARs protein in an ABA-independent manner, both at the plasma membrane and in the nucleus. Interacts with ABI1 and HAB1, and possibly with other PP2Cs, in an ABA-independent manner.

It is found in the cytoplasm. The protein resides in the nucleus. Its subcellular location is the cell membrane. Its function is as follows. Receptor for abscisic acid (ABA) required for ABA-mediated responses such as stomatal closure and germination inhibition. Inhibits the activity of group-A protein phosphatases type 2C (PP2Cs) in an ABA-independent manner but more efficiently when activated by ABA. Can be activated by both (-)-ABA and (+)-ABA. The sequence is that of Abscisic acid receptor PYL10 (PYL10) from Arabidopsis thaliana (Mouse-ear cress).